Reading from the N-terminus, the 657-residue chain is uncharacterized protein (657 aa).

A Phosphoserine modification is found at serine 114. Disordered stretches follow at residues 142–216 (LASQ…SDEE), 228–248 (SSRE…EEEE), 291–312 (STRS…SHTP), 335–354 (SSPG…EGAD), and 399–522 (AEAS…SGRH). The segment covering 143–169 (ASQNTDKTSQNQARELPVTENNAQNAK) has biased composition (polar residues). The segment covering 190–206 (AGKERTLQTPKQKEPAR) has biased composition (basic and acidic residues). The residue at position 213 (serine 213) is a Phosphoserine. 2 stretches are compositionally biased toward polar residues: residues 234–243 (TNQGFSSANV) and 301–312 (SHVSSDTASHTP). Over residues 343-354 (ETVDEPVSEGAD) the composition is skewed to acidic residues. Residues 437–451 (SASSASAIQQDSTSS) show a composition bias toward low complexity. Residues 462–484 (NTVSSAYSEDFENSPSLTASEPT) show a composition bias toward polar residues. Over residues 485–495 (AHSKESLDRTL) the composition is skewed to basic and acidic residues. Residues 499-513 (SESSSSVKTDLPQTA) show a composition bias toward polar residues.

This is an uncharacterized protein from Homo sapiens (Human).